Here is a 467-residue protein sequence, read N- to C-terminus: MIPATTFHGRQVALFGLGGSGIATAQAIMAGGGEVLAWDDNPESVAKAKAEGIKTGDLRDADWRSIHTLLLAPGVPLTHPHPHWSVELARSAGVEIIGDIELFVRERRMHAAHAPLVAITGTNGKSTTTALTAHVLKAAGRDTQMGGNIGRAVMTLDPPVADRHYVLECSSYQIDLSPTLNPTAGVLLNITPDHLDRHGTMENYAAIKERLVAGSDTAIIGVDDEYCRAVADRLEKAGRKVSRISLTGTLEDGFFADGTQLFRAGQGKAEPLFSLEGIGSLRGRHNAQNALAAAAACLACGLSPAEIQTGFRSFPGLAHRMEQVGKLGHVLFVNDSKATNADASAPALSSFPRIYWIAGGLPKAGGIASLRQYFPRIAKAYLIGEAAPAFAATIGEATNYEISGTIAAAVQHAARDAADDPAGDVVVLLSPACASFDQFRNFEVRGEAFRDAVRALPGIELIGEKRA.

121-127 (GTNGKST) serves as a coordination point for ATP.

This sequence belongs to the MurCDEF family.

It localises to the cytoplasm. The catalysed reaction is UDP-N-acetyl-alpha-D-muramoyl-L-alanine + D-glutamate + ATP = UDP-N-acetyl-alpha-D-muramoyl-L-alanyl-D-glutamate + ADP + phosphate + H(+). The protein operates within cell wall biogenesis; peptidoglycan biosynthesis. Functionally, cell wall formation. Catalyzes the addition of glutamate to the nucleotide precursor UDP-N-acetylmuramoyl-L-alanine (UMA). This Chelativorans sp. (strain BNC1) protein is UDP-N-acetylmuramoylalanine--D-glutamate ligase.